We begin with the raw amino-acid sequence, 135 residues long: C-type Lectin CRL (135 aa).

Disulfide bonds link Cys-3/Cys-14, Cys-31/Cys-131, Cys-38/Cys-133, and Cys-106/Cys-123. One can recognise a C-type lectin domain in the interval 10-132 (MNGLCYKIFN…CESKDAFLCQ (123 aa)). Ca(2+) is bound by residues Gln-96, Asp-98, Glu-104, Asn-119, and Asp-120. A Galactose-binding motif is present at residues 96–98 (QPD).

It belongs to the true venom lectin family. As to quaternary structure, homodimer; disulfide-linked. As to expression, expressed by the venom gland.

The protein resides in the secreted. Its function is as follows. Beta-galactoside and N-acetylgalactosamine (GalNAc) specific C-type lectin. The chain is C-type Lectin CRL from Crotalus ruber ruber (Red diamond rattlesnake).